The sequence spans 325 residues: GMP reductase (325 aa).

Cys174 (thioimidate intermediate) is an active-site residue. 203–226 is an NADP(+) binding site; it reads LIADGGIRTHGDIAKSIRFGASMV.

This sequence belongs to the IMPDH/GMPR family. GuaC type 2 subfamily.

It carries out the reaction IMP + NH4(+) + NADP(+) = GMP + NADPH + 2 H(+). Functionally, catalyzes the irreversible NADPH-dependent deamination of GMP to IMP. It functions in the conversion of nucleobase, nucleoside and nucleotide derivatives of G to A nucleotides, and in maintaining the intracellular balance of A and G nucleotides. The chain is GMP reductase from Staphylococcus aureus (strain JH9).